Consider the following 78-residue polypeptide: Sperm-specific protein Phi-0 (78 aa).

Composition is skewed to basic residues over residues 1-21, 31-57, and 64-78; these read MVAR…RSAA, AASR…KPKA, and VRRR…SVSK. The disordered stretch occupies residues 1–78; it reads MVARRQTKKA…RRIRRASVSK (78 aa).

The protein resides in the nucleus. The protein localises to the chromosome. Involved in nuclear basic protein transition: histones are replaced by spermatid specific proteins which are themselves replaced by protamines in late spermatids. This is Sperm-specific protein Phi-0 from Holothuria tubulosa (Tubular sea cucumber).